Consider the following 60-residue polypeptide: MAKIKITWVKSTIGYKFDQAATIKALGFKKLNQSVIQDDSSAIRGMILKVRHLVVLEEVT.

Belongs to the universal ribosomal protein uL30 family. As to quaternary structure, part of the 50S ribosomal subunit.

The sequence is that of Large ribosomal subunit protein uL30 from Dehalococcoides mccartyi (strain CBDB1).